We begin with the raw amino-acid sequence, 249 residues long: MLDSLSVLNFYSLASLEVGQHWYWHIGGLKIHGQVIAVSWIVFAILIIASIAATRKIQKVPSGIQNLMEYVLEFLRDLAKNQLGEKEYRPWLPFIGTLFLFIFVSNWLGALIPWKLIELPEGELAAPTNDINTTVALALLTSLAYFYAGISKKGLGYFAHYLEPIPVLLPIKILEDFTKPLSLSFRLFGNILADELVVAVLVFLVPLVVPLPLMALGLFTSAIQALVFATLAGAYIHEALESEHEEEHA.

The next 5 helical transmembrane spans lie at 33–53, 92–112, 131–151, 196–216, and 217–237; these read GQVI…SIAA, LPFI…GALI, INTT…AGIS, LVVA…LMAL, and GLFT…AYIH.

Belongs to the ATPase A chain family. F-type ATPases have 2 components, CF(1) - the catalytic core - and CF(0) - the membrane proton channel. CF(1) has five subunits: alpha(3), beta(3), gamma(1), delta(1), epsilon(1). CF(0) has four main subunits: a, b, b' and c.

The protein localises to the cellular thylakoid membrane. Functionally, key component of the proton channel; it plays a direct role in the translocation of protons across the membrane. The chain is ATP synthase subunit a from Microcystis aeruginosa (strain NIES-843 / IAM M-2473).